We begin with the raw amino-acid sequence, 150 residues long: UPF0756 membrane protein ACICU_02320 (150 aa).

Transmembrane regions (helical) follow at residues Met1–Leu21, Phe45–Val65, Phe83–Gly103, and Val115–Val135.

This sequence belongs to the UPF0756 family.

The protein resides in the cell membrane. The protein is UPF0756 membrane protein ACICU_02320 of Acinetobacter baumannii (strain ACICU).